The sequence spans 396 residues: Na(+)/H(+) antiporter NhaA (396 aa).

The next 11 helical transmembrane spans lie at 17–37 (FSGL…NTNF), 59–79 (FSLT…EIGI), 97–117 (ILPG…YNFI), 127–147 (GWAI…KILG), 156–176 (IFLL…IAFF), 181–201 (IDQY…SINY), 206–226 (CIYI…LSGI), 260–280 (SLSF…NSGI), 292–312 (LLPF…VFLF), 333–353 (IAGI…ISNL), and 368–388 (FSIL…LYFL).

It belongs to the NhaA Na(+)/H(+) (TC 2.A.33) antiporter family.

It is found in the cell membrane. The catalysed reaction is Na(+)(in) + 2 H(+)(out) = Na(+)(out) + 2 H(+)(in). In terms of biological role, na(+)/H(+) antiporter that extrudes sodium in exchange for external protons. This chain is Na(+)/H(+) antiporter NhaA, found in Wigglesworthia glossinidia brevipalpis.